The primary structure comprises 121 residues: Small ribosomal subunit protein uS13 (121 aa).

Residues 97–121 are disordered; that stretch reads VRGQRTRTNARTRRGARKTVAGRKK. The span at 100 to 121 shows a compositional bias: basic residues; sequence QRTRTNARTRRGARKTVAGRKK.

This sequence belongs to the universal ribosomal protein uS13 family. In terms of assembly, part of the 30S ribosomal subunit. Forms a loose heterodimer with protein S19. Forms two bridges to the 50S subunit in the 70S ribosome.

In terms of biological role, located at the top of the head of the 30S subunit, it contacts several helices of the 16S rRNA. In the 70S ribosome it contacts the 23S rRNA (bridge B1a) and protein L5 of the 50S subunit (bridge B1b), connecting the 2 subunits; these bridges are implicated in subunit movement. Contacts the tRNAs in the A and P-sites. This Prochlorococcus marinus (strain NATL2A) protein is Small ribosomal subunit protein uS13.